We begin with the raw amino-acid sequence, 245 residues long: Leucyl/phenylalanyl-tRNA--protein transferase (245 aa).

It belongs to the L/F-transferase family.

It localises to the cytoplasm. It carries out the reaction N-terminal L-lysyl-[protein] + L-leucyl-tRNA(Leu) = N-terminal L-leucyl-L-lysyl-[protein] + tRNA(Leu) + H(+). It catalyses the reaction N-terminal L-arginyl-[protein] + L-leucyl-tRNA(Leu) = N-terminal L-leucyl-L-arginyl-[protein] + tRNA(Leu) + H(+). The enzyme catalyses L-phenylalanyl-tRNA(Phe) + an N-terminal L-alpha-aminoacyl-[protein] = an N-terminal L-phenylalanyl-L-alpha-aminoacyl-[protein] + tRNA(Phe). Functions in the N-end rule pathway of protein degradation where it conjugates Leu, Phe and, less efficiently, Met from aminoacyl-tRNAs to the N-termini of proteins containing an N-terminal arginine or lysine. This is Leucyl/phenylalanyl-tRNA--protein transferase from Paraburkholderia xenovorans (strain LB400).